A 229-amino-acid chain; its full sequence is Ribonuclease S-6 (229 aa).

Positions 1–27 are cleaved as a signal peptide; that stretch reads MGITGMIYMVPMVFSLIVLISCSSTMG. Glutamine 36 serves as a coordination point for RNA. A disulfide bridge links cysteine 42 with cysteine 49. Histidine 60 serves as a coordination point for RNA. Residue histidine 60 is the Proton donor of the active site. Cysteine 75 and cysteine 119 are joined by a disulfide. Residues asparagine 77 and asparagine 87 are each glycosylated (N-linked (GlcNAc) asparagine). Residues 98 to 99, phenylalanine 108, 111 to 112, and 115 to 116 contribute to the RNA site; these read NV, RQ, and KH. The active site involves glutamine 112. Histidine 116 acts as the Proton acceptor in catalysis. N-linked (GlcNAc...) (high mannose) asparagine glycosylation occurs at asparagine 145. 2 disulfides stabilise this stretch: cysteine 184-cysteine 222 and cysteine 199-cysteine 210. Residue asparagine 188 is glycosylated (N-linked (GlcNAc) asparagine; alternate). Residues asparagine 188 and asparagine 203 are each glycosylated (N-linked (GlcNAc...) asparagine; alternate).

It belongs to the RNase T2 family. In terms of processing, the N-glycans attached at Asn-188 and Asn-203 consist of either monosaccharide (GlcNAc) or disaccharide (GlcNAc-GlcNAc) that could not be distinguished.

The catalysed reaction is a ribonucleotidyl-ribonucleotide-RNA + H2O = a 3'-end 3'-phospho-ribonucleotide-RNA + a 5'-end dephospho-ribonucleoside-RNA + H(+). Its function is as follows. Self-incompatibility (SI) is the inherited ability of a flowering plant to prevent self-fertilization by discriminating between self and non-self pollen during pollination. In many species, self-incompatibility is controlled by the single, multiallelic locus S. This Pyrus pyrifolia (Chinese pear) protein is Ribonuclease S-6.